An 87-amino-acid polypeptide reads, in one-letter code: Cell division topological specificity factor (87 aa).

This sequence belongs to the MinE family.

Prevents the cell division inhibition by proteins MinC and MinD at internal division sites while permitting inhibition at polar sites. This ensures cell division at the proper site by restricting the formation of a division septum at the midpoint of the long axis of the cell. The polypeptide is Cell division topological specificity factor (Blochmanniella pennsylvanica (strain BPEN)).